The sequence spans 317 residues: Dehydrogenase/reductase SDR family member 12 (317 aa).

The NAD(+) site is built by Ser50 and Ile52. Position 175 (Ser175) interacts with substrate. Residues Tyr201, Lys205, and Thr234 each contribute to the NAD(+) site. The active-site Proton acceptor is the Tyr201.

Belongs to the short-chain dehydrogenases/reductases (SDR) family.

Putative oxidoreductase. In Bos taurus (Bovine), this protein is Dehydrogenase/reductase SDR family member 12 (DHRS12).